The following is a 428-amino-acid chain: Putative POM121-like protein 1 (428 aa).

Disordered regions lie at residues 1–23 (MDSLWGPGAGSHPFGVHNSRLSP), 36–204 (KESG…KFPL), 254–293 (DCRPSRPSHTLSSLATGASGLPAVSKAPSMDAQQERHKSQ), 306–384 (TEVP…PSTL), and 402–428 (GPQPQLQQVPRGQNQRSQTSRTSSCPK). The segment covering 44–62 (EQDKDPRVQENPGDQRRVP) has biased composition (basic and acidic residues). The segment covering 106–117 (QTSQTSWTSSCT) has biased composition (low complexity). Polar residues-rich tracts occupy residues 118–129 (NRNAISSSYSST), 144–155 (SHCQLTLSSSKT), 260–269 (PSHTLSSLAT), 326–347 (FSSSDPLPATSSHSQDSAQVTS), and 403–415 (PQPQLQQVPRGQN). Over residues 416–428 (QRSQTSRTSSCPK) the composition is skewed to low complexity.

Belongs to the POM121 family.

The polypeptide is Putative POM121-like protein 1 (POM121L1P) (Homo sapiens (Human)).